The chain runs to 110 residues: Integration host factor subunit alpha (110 aa).

This sequence belongs to the bacterial histone-like protein family. As to quaternary structure, heterodimer of an alpha and a beta chain.

Its function is as follows. This protein is one of the two subunits of integration host factor, a specific DNA-binding protein that functions in genetic recombination as well as in transcriptional and translational control. The polypeptide is Integration host factor subunit alpha (Delftia acidovorans (strain DSM 14801 / SPH-1)).